A 175-amino-acid polypeptide reads, in one-letter code: Vitamin K epoxide reductase complex subunit 1-like protein 1 (175 aa).

Topologically, residues 1–12 (MAAPVLRVSTPR) are cytoplasmic. A helical membrane pass occupies residues 13–35 (WERIARVLVCLLGILLSLYAFHV). The Lumenal portion of the chain corresponds to 36–86 (EREHARDPSYKALCDVSSSISCSKVFGSRWGRGFGLLGSIFGNDSALNQPN). An intrachain disulfide couples cysteine 49 to cysteine 57. Residue asparagine 86 coordinates (S)-warfarin. The chain crosses the membrane as a helical span at residues 87 to 101 (SVYGIVFYAFQLLLG). Over 102–106 (MTVSA) the chain is Cytoplasmic. The chain crosses the membrane as a helical span at residues 107–134 (MAALILMTTSIMSVVGSLYLGYILYFVL). At 135–137 (KDL) the chain is on the lumenal side. The cysteines at positions 138 and 141 are disulfide-linked. The helical transmembrane segment at 138-159 (CVICVTTYALNFILFVLNYKRL) threads the bilayer. Residues cysteine 141 and tyrosine 145 each coordinate phylloquinone. Tyrosine 145 provides a ligand contact to (S)-warfarin. The Cytoplasmic segment spans residues 160 to 175 (VYLNEAWKQKLQAKQD).

This sequence belongs to the VKOR family.

It is found in the endoplasmic reticulum membrane. It catalyses the reaction phylloquinone + [protein]-disulfide + H2O = 2,3-epoxyphylloquinone + [protein]-dithiol. The catalysed reaction is phylloquinol + [protein]-disulfide = phylloquinone + [protein]-dithiol. Inhibited by warfarin (coumadin). Warfarin locks VKORC1 in both redox states into the closed conformation. In terms of biological role, involved in vitamin K metabolism. Can reduce inactive vitamin K 2,3-epoxide to active vitamin K, and may contribute to vitamin K-mediated protection against oxidative stress. Plays a role in vitamin K-dependent gamma-carboxylation of Glu residues in target proteins. The chain is Vitamin K epoxide reductase complex subunit 1-like protein 1 (vkorc1l1) from Takifugu rubripes (Japanese pufferfish).